A 352-amino-acid chain; its full sequence is Holliday junction branch migration complex subunit RuvB (352 aa).

The tract at residues 1–42 (MAIVSSSAGRADSQPPAAKSRVVDASPLPEEASPAREDGLRP) is disordered. The large ATPase domain (RuvB-L) stretch occupies residues 13 to 201 (SQPPAAKSRV…FGLIQRLEFY (189 aa)). Over residues 33-42 (SPAREDGLRP) the composition is skewed to basic and acidic residues. 9 residues coordinate ATP: leucine 40, arginine 41, glycine 82, lysine 85, threonine 86, threonine 87, arginine 191, tyrosine 201, and arginine 238. Residue threonine 86 coordinates Mg(2+). The small ATPAse domain (RuvB-S) stretch occupies residues 202–273 (GLEDLQAIVE…LVDEALTLHR (72 aa)). Positions 276–352 (ARGLDASDRR…RRHLGWPELP (77 aa)) are head domain (RuvB-H). DNA is bound by residues arginine 331 and arginine 336.

This sequence belongs to the RuvB family. As to quaternary structure, homohexamer. Forms an RuvA(8)-RuvB(12)-Holliday junction (HJ) complex. HJ DNA is sandwiched between 2 RuvA tetramers; dsDNA enters through RuvA and exits via RuvB. An RuvB hexamer assembles on each DNA strand where it exits the tetramer. Each RuvB hexamer is contacted by two RuvA subunits (via domain III) on 2 adjacent RuvB subunits; this complex drives branch migration. In the full resolvosome a probable DNA-RuvA(4)-RuvB(12)-RuvC(2) complex forms which resolves the HJ.

Its subcellular location is the cytoplasm. The enzyme catalyses ATP + H2O = ADP + phosphate + H(+). Its function is as follows. The RuvA-RuvB-RuvC complex processes Holliday junction (HJ) DNA during genetic recombination and DNA repair, while the RuvA-RuvB complex plays an important role in the rescue of blocked DNA replication forks via replication fork reversal (RFR). RuvA specifically binds to HJ cruciform DNA, conferring on it an open structure. The RuvB hexamer acts as an ATP-dependent pump, pulling dsDNA into and through the RuvAB complex. RuvB forms 2 homohexamers on either side of HJ DNA bound by 1 or 2 RuvA tetramers; 4 subunits per hexamer contact DNA at a time. Coordinated motions by a converter formed by DNA-disengaged RuvB subunits stimulates ATP hydrolysis and nucleotide exchange. Immobilization of the converter enables RuvB to convert the ATP-contained energy into a lever motion, pulling 2 nucleotides of DNA out of the RuvA tetramer per ATP hydrolyzed, thus driving DNA branch migration. The RuvB motors rotate together with the DNA substrate, which together with the progressing nucleotide cycle form the mechanistic basis for DNA recombination by continuous HJ branch migration. Branch migration allows RuvC to scan DNA until it finds its consensus sequence, where it cleaves and resolves cruciform DNA. In Prochlorococcus marinus (strain MIT 9303), this protein is Holliday junction branch migration complex subunit RuvB.